Reading from the N-terminus, the 73-residue chain is Putative membrane protein insertion efficiency factor (73 aa).

The protein belongs to the UPF0161 family.

Its subcellular location is the cell inner membrane. In terms of biological role, could be involved in insertion of integral membrane proteins into the membrane. The protein is Putative membrane protein insertion efficiency factor of Rickettsia bellii (strain RML369-C).